The following is a 286-amino-acid chain: Sulfur carrier protein FdhD (286 aa).

The Cysteine persulfide intermediate role is filled by Cys110. 247 to 252 (FARGEK) contacts Mo-bis(molybdopterin guanine dinucleotide).

This sequence belongs to the FdhD family.

It is found in the cytoplasm. Required for formate dehydrogenase (FDH) activity. Acts as a sulfur carrier protein that transfers sulfur from IscS to the molybdenum cofactor prior to its insertion into FDH. The protein is Sulfur carrier protein FdhD of Wolinella succinogenes (strain ATCC 29543 / DSM 1740 / CCUG 13145 / JCM 31913 / LMG 7466 / NCTC 11488 / FDC 602W) (Vibrio succinogenes).